The primary structure comprises 732 residues: Polyadenylate-binding protein, cytoplasmic and nuclear (732 aa).

Residues 1 to 19 (MSAETSTTPAPAENTNGTP) are compositionally biased toward polar residues. Residues 1–26 (MSAETSTTPAPAENTNGTPDNAPAPE) form a disordered region. RRM domains lie at 42–120 (ASLY…WSQR), 130–207 (GNVF…HHIS), 223–300 (TNIY…RAQK), and 326–454 (VNLY…LAQR). 2 disordered regions span residues 357 to 413 (VMRD…KKPL) and 706 to 732 (MKNK…ENKA). Positions 371–412 (SETKESANKENEKAAEGEKEPAAEEKEKEEKKEAEQKPEKKP) are enriched in basic and acidic residues. Residues 630–707 (VGVLTAQALS…ALSVYDEYMK (78 aa)) enclose the PABC domain.

This sequence belongs to the polyadenylate-binding protein type-1 family.

The protein resides in the cytoplasm. It is found in the nucleus. In terms of biological role, binds the poly(A) tail of mRNA. Appears to be an important mediator of the multiple roles of the poly(A) tail in mRNA biogenesis, stability and translation. In the nucleus, involved in both mRNA cleavage and polyadenylation. Is also required for efficient mRNA export to the cytoplasm. Acts in concert with a poly(A)-specific nuclease (PAN) to affect poly(A) tail shortening, which may occur concomitantly with either nucleocytoplasmic mRNA transport or translational initiation. In the cytoplasm, stimulates translation initiation and regulates mRNA decay through translation termination-coupled poly(A) shortening, probably mediated by PAN. This Emericella nidulans (strain FGSC A4 / ATCC 38163 / CBS 112.46 / NRRL 194 / M139) (Aspergillus nidulans) protein is Polyadenylate-binding protein, cytoplasmic and nuclear (pab1).